An 87-amino-acid chain; its full sequence is Small ribosomal subunit protein uS15 (87 aa).

It belongs to the universal ribosomal protein uS15 family. Part of the 30S ribosomal subunit. Forms a bridge to the 50S subunit in the 70S ribosome, contacting the 23S rRNA.

Functionally, one of the primary rRNA binding proteins, it binds directly to 16S rRNA where it helps nucleate assembly of the platform of the 30S subunit by binding and bridging several RNA helices of the 16S rRNA. In terms of biological role, forms an intersubunit bridge (bridge B4) with the 23S rRNA of the 50S subunit in the ribosome. The polypeptide is Small ribosomal subunit protein uS15 (Clostridium kluyveri (strain NBRC 12016)).